The primary structure comprises 531 residues: Peptide chain release factor 3 (531 aa).

A tr-type G domain is found at 13-282 (SKRRTFAIIS…GLTQWAPSPM (270 aa)). GTP-binding positions include 22–29 (SHPDAGKT), 90–94 (DTPGH), and 144–147 (NKLD).

It belongs to the TRAFAC class translation factor GTPase superfamily. Classic translation factor GTPase family. PrfC subfamily.

It is found in the cytoplasm. Its function is as follows. Increases the formation of ribosomal termination complexes and stimulates activities of RF-1 and RF-2. It binds guanine nucleotides and has strong preference for UGA stop codons. It may interact directly with the ribosome. The stimulation of RF-1 and RF-2 is significantly reduced by GTP and GDP, but not by GMP. This Vibrio cholerae serotype O1 (strain ATCC 39315 / El Tor Inaba N16961) protein is Peptide chain release factor 3.